The chain runs to 348 residues: Centromere protein N (348 aa).

The protein belongs to the CENP-N/CHL4 family.

It localises to the nucleus. Its subcellular location is the chromosome. The protein resides in the centromere. Probable component of a centromeric complex involved in assembly of kinetochore proteins, mitotic progression and chromosome segregation. The polypeptide is Centromere protein N (cenpn) (Xenopus tropicalis (Western clawed frog)).